We begin with the raw amino-acid sequence, 359 residues long: uncharacterized protein (359 aa).

6 helical membrane-spanning segments follow: residues 4–24 (ELFV…HLFK), 36–56 (FQAV…VFGF), 68–88 (IPIM…ALAM), 94–114 (LLIT…IAAI), 129–149 (HAFY…YFLI), and 155–175 (ELHL…LYII). Residues 223–357 (FQFALIYMDI…GRNRVCFSEK (135 aa)) enclose the GGDEF domain.

The protein resides in the cell membrane. This is an uncharacterized protein from Bacillus subtilis (strain 168).